The primary structure comprises 303 residues: Elongation factor Ts (303 aa).

The segment at Thr-82 to Val-85 is involved in Mg(2+) ion dislocation from EF-Tu.

The protein belongs to the EF-Ts family.

It is found in the cytoplasm. Functionally, associates with the EF-Tu.GDP complex and induces the exchange of GDP to GTP. It remains bound to the aminoacyl-tRNA.EF-Tu.GTP complex up to the GTP hydrolysis stage on the ribosome. This chain is Elongation factor Ts, found in Clostridioides difficile (strain 630) (Peptoclostridium difficile).